A 91-amino-acid polypeptide reads, in one-letter code: RNA-binding protein Hfq (91 aa).

Residues 9–68 form the Sm domain; that stretch reads DPFLNALRRERVPVSVYLVNGIKLQGTIESFDQFVVLLRNTVSQMVYKHAISTVVPARNV.

It belongs to the Hfq family. As to quaternary structure, homohexamer.

Functionally, RNA chaperone that binds small regulatory RNA (sRNAs) and mRNAs to facilitate mRNA translational regulation in response to envelope stress, environmental stress and changes in metabolite concentrations. Also binds with high specificity to tRNAs. The sequence is that of RNA-binding protein Hfq from Stenotrophomonas maltophilia (strain K279a).